The sequence spans 152 residues: NADH-quinone oxidoreductase subunit A 2 (152 aa).

The next 3 membrane-spanning stretches (helical) occupy residues 8-28 (FGKV…GYVS), 63-83 (FYVV…LFPW), and 90-110 (LGGF…LGLV).

The protein belongs to the complex I subunit 3 family. NDH-1 is composed of 14 different subunits. Subunits NuoA, H, J, K, L, M, N constitute the membrane sector of the complex.

It is found in the cell inner membrane. It catalyses the reaction a quinone + NADH + 5 H(+)(in) = a quinol + NAD(+) + 4 H(+)(out). In terms of biological role, NDH-1 shuttles electrons from NADH, via FMN and iron-sulfur (Fe-S) centers, to quinones in the respiratory chain. The immediate electron acceptor for the enzyme in this species is believed to be a menaquinone. Couples the redox reaction to proton translocation (for every two electrons transferred, four hydrogen ions are translocated across the cytoplasmic membrane), and thus conserves the redox energy in a proton gradient. The chain is NADH-quinone oxidoreductase subunit A 2 from Chloroherpeton thalassium (strain ATCC 35110 / GB-78).